A 727-amino-acid chain; its full sequence is DNA replication licensing factor MCM5 (727 aa).

Positions 325 to 531 (VYKNICTKIA…SQDKEIASHI (207 aa)) constitute an MCM domain. 375-382 (GDPSTAKS) provides a ligand contact to ATP. An Arginine finger motif is present at residues 507 to 510 (SRFD).

This sequence belongs to the MCM family. In terms of assembly, component of the minichromosome maintenance (MCM) complex, a heterotetramer composed of MCM2, MCM3, MCM4, MCM5, MCM6 and MCM7. Interacts with EGT1. Expressed in shoot apex and flower buds.

Its subcellular location is the nucleus. The protein resides in the cytoplasm. It catalyses the reaction ATP + H2O = ADP + phosphate + H(+). In terms of biological role, probable component of the MCM2-7 complex (MCM complex) that may function as a DNA helicase and which is essential to undergo a single round of replication initiation and elongation per cell cycle in eukaryotic cells. The polypeptide is DNA replication licensing factor MCM5 (MCM5) (Arabidopsis thaliana (Mouse-ear cress)).